We begin with the raw amino-acid sequence, 287 residues long: Pantothenate synthetase (287 aa).

30–37 provides a ligand contact to ATP; the sequence is MGALHSGH. The active-site Proton donor is His-37. Position 61 (Gln-61) interacts with (R)-pantoate. Gln-61 is a beta-alanine binding site. 152–155 serves as a coordination point for ATP; sequence GQKD. Gln-158 contacts (R)-pantoate. ATP-binding positions include Ile-181 and 189-192; that span reads ESSR.

It belongs to the pantothenate synthetase family. As to quaternary structure, homodimer.

The protein localises to the cytoplasm. The catalysed reaction is (R)-pantoate + beta-alanine + ATP = (R)-pantothenate + AMP + diphosphate + H(+). It functions in the pathway cofactor biosynthesis; (R)-pantothenate biosynthesis; (R)-pantothenate from (R)-pantoate and beta-alanine: step 1/1. Functionally, catalyzes the condensation of pantoate with beta-alanine in an ATP-dependent reaction via a pantoyl-adenylate intermediate. The sequence is that of Pantothenate synthetase from Corynebacterium efficiens (strain DSM 44549 / YS-314 / AJ 12310 / JCM 11189 / NBRC 100395).